Reading from the N-terminus, the 530-residue chain is Amidase FVEG_08295 (530 aa).

Residues Lys-138 and Ser-214 each act as charge relay system in the active site. Substrate-binding positions include Ser-214 and 235–238; that span reads IAGS. Ser-238 acts as the Acyl-ester intermediate in catalysis.

This sequence belongs to the amidase family.

It carries out the reaction a monocarboxylic acid amide + H2O = a monocarboxylate + NH4(+). It participates in xenobiotic degradation. Amidase; part of the Fusarium detoxification of benzoxazolinone cluster 1 (FDB1) involved in the degradation of benzoxazolinones produced by the host plant. Maize, wheat, and rye produce the 2 benzoxazinone phytoanticipins 2,4-dihy-droxy-7-methoxy-1,4-benzoxazin-3-one (DIMBOA) and 2,4-dihydroxy-1,4-benzoxazin-3-one (DIBOA) that, due to their inherent instability once released, spontaneously degrade to the more stable corresponding benzoxazolinones, 6-methoxy-2-benzoxazolinone (MBOA) and 2-benzoxazolinone (BOA), respectively. The first step in the detoxification of benzoxazolinones involves the hydrolysis of the cyclic ester bond of benzoxazolinones by the FDB1 cluster gamma-lactamase MBL1 to aminophenols. MBL1 is able to convert BOA into 2-aminophenol (2-AP), as well as MBOA into 5-methoxy-2-aminophenol (2-AMP). The FDB2 cluster N-malonyltransferase FDB2/NAT1 then metabolizes aminophenols via N-malonylation to non-toxic malonamic acids. FDB2/NAT1 converts 2-AP into N-(2-hydroxyphenyl) malonamic acid (HPMA) and 2-AMP into N-(2-hydroxy-4-methoxyphenyl) malonamic acid (HMPMA). The duplicated dienlactone hydrolases DLH1 and DLH2 may provide redundant function for hydrolyzing the lactone moiety in the BOA molecule. The roles of the amidases an other enzymes encoded by the 2 FDB clusters have not been identified so far. The chain is Amidase FVEG_08295 from Gibberella moniliformis (strain M3125 / FGSC 7600) (Maize ear and stalk rot fungus).